The following is an 81-amino-acid chain: Antimicrobial peptide Con22 (81 aa).

The first 22 residues, 1 to 22 (MNAKVMLVCLLVTMLVMEPAEA), serve as a signal peptide directing secretion. Positions 66-81 (EAGQIPFDEFMNVLYS) are excised as a propeptide.

Belongs to the non-disulfide-bridged peptide (NDBP) superfamily. Long chain multifunctional peptide (group 2) family. Expressed by the venom gland.

The protein localises to the secreted. It localises to the target cell membrane. Its function is as follows. At high concentrations, acts as a pore former in cellular membranes and causes the leakage of the cells. At submicromolar concentrations, degranulates granulocytes and has a weak hemolytic activity against human erythrocytes. Also strongly inhibits the production of superoxide anions. Has a strong antibacterial activity against Gram-negative bacteria but is less active against Gram-positive bacteria. Also has antifungal activity. The chain is Antimicrobial peptide Con22 from Urodacus yaschenkoi (Inland robust scorpion).